A 1055-amino-acid polypeptide reads, in one-letter code: DIS3-like exonuclease 2 (1055 aa).

Disordered regions lie at residues 1 to 109 and 229 to 249; these read MKSA…SSPE and SAAK…KARQ. Residues 17–32 are compositionally biased toward basic residues; the sequence is HKKKRNRPQKQNRRSK. Basic and acidic residues predominate over residues 39-59; the sequence is EDAHVEESLDGRDSSRSKAKD. A compositionally biased stretch (low complexity) spans 97-108; sequence PRRSASPLLSSP. 2 residues coordinate Mg(2+): D488 and D497.

This sequence belongs to the RNR ribonuclease family. DIS3L2 subfamily. It depends on Mg(2+) as a cofactor. The cofactor is Mn(2+). As to expression, widely expressed.

The protein resides in the cytoplasm. It localises to the P-body. Functionally, 3'-5'-exoribonuclease that specifically recognizes RNAs polyuridylated at their 3' end and mediates their degradation. Component of an exosome-independent RNA degradation pathway that mediates degradation of cytoplasmic mRNAs that have been deadenylated and subsequently uridylated at their 3'. The polypeptide is DIS3-like exonuclease 2 (SOV) (Arabidopsis thaliana (Mouse-ear cress)).